We begin with the raw amino-acid sequence, 758 residues long: Inhibitor of nuclear factor kappa-B kinase subunit alpha (758 aa).

Residues 15–301 (WVMKERLGTG…LNTDSKQPQC (287 aa)) form the Protein kinase domain. ATP-binding positions include 21-29 (LGTGGFGHV) and Lys-44. The Proton acceptor role is filled by Asp-145. Residues 456–477 (LLRFNTNLTRYKNMMFSFSQQL) form a leucine-zipper region. Residues 741–746 (QDWSWT) are NEMO-binding.

Belongs to the protein kinase superfamily. Ser/Thr protein kinase family. I-kappa-B kinase subfamily. Directly interacts with ikbkg/nemo.

The protein resides in the cytoplasm. Its subcellular location is the nucleus. The enzyme catalyses L-seryl-[I-kappa-B protein] + ATP = O-phospho-L-seryl-[I-kappa-B protein] + ADP + H(+). Its activity is regulated as follows. Activated when phosphorylated and inactivated when dephosphorylated. Functionally, phosphorylates inhibitors of NF-kappa-B thus leading to the dissociation of the inhibitor/NF-kappa-B complex and ultimately the degradation of the inhibitor. Phosphorylates 'Ser-10' of histone H3 at NF-kappa-B-regulated promoters during inflammatory responses triggered by cytokines. The sequence is that of Inhibitor of nuclear factor kappa-B kinase subunit alpha (chuk) from Danio rerio (Zebrafish).